A 340-amino-acid polypeptide reads, in one-letter code: NADH-quinone oxidoreductase subunit H (340 aa).

8 helical membrane passes run 4-24 (TIGI…PLLI), 78-98 (YLFV…WAVI), 113-133 (VLYL…AGWA), 151-171 (VSYE…AGSM), 184-204 (MLHW…ISGI), 244-264 (SMIL…LSPF), 273-293 (IFFI…FLFV), and 316-336 (VLIP…VAHV).

The protein belongs to the complex I subunit 1 family. In terms of assembly, NDH-1 is composed of 14 different subunits. Subunits NuoA, H, J, K, L, M, N constitute the membrane sector of the complex.

It is found in the cell inner membrane. The catalysed reaction is a quinone + NADH + 5 H(+)(in) = a quinol + NAD(+) + 4 H(+)(out). Functionally, NDH-1 shuttles electrons from NADH, via FMN and iron-sulfur (Fe-S) centers, to quinones in the respiratory chain. The immediate electron acceptor for the enzyme in this species is believed to be ubiquinone. Couples the redox reaction to proton translocation (for every two electrons transferred, four hydrogen ions are translocated across the cytoplasmic membrane), and thus conserves the redox energy in a proton gradient. This subunit may bind ubiquinone. The chain is NADH-quinone oxidoreductase subunit H from Legionella pneumophila (strain Lens).